The following is a 469-amino-acid chain: Aryl-phospho-beta-D-glucosidase BglH (469 aa).

The active-site Proton donor is Glu-175. Catalysis depends on Glu-368, which acts as the Nucleophile.

This sequence belongs to the glycosyl hydrolase 1 family.

The enzyme catalyses 6-phospho-beta-D-glucosyl-(1-&gt;4)-D-glucose + H2O = D-glucose 6-phosphate + D-glucose. In terms of biological role, catalyzes the hydrolysis of aryl-phospho-beta-D-glucosides such as 4-methylumbelliferyl-phospho-beta-D-glucopyranoside (MUG-P), phosphoarbutin and phosphosalicin. Plays a major role in the utilization of arbutin or salicin as the sole carbon source. BglA and BglH are the major proteins contributing to hydrolysis of MUG-P by extracts of late-exponential-phase or stationary-phase B.subtilis cells. In Bacillus subtilis (strain 168), this protein is Aryl-phospho-beta-D-glucosidase BglH (bglH).